The primary structure comprises 260 residues: Thiazole synthase (260 aa).

The Schiff-base intermediate with DXP role is filled by Lys-96. Residues Gly-157, 184–185, and 206–207 contribute to the 1-deoxy-D-xylulose 5-phosphate site; these read AG and NT.

Belongs to the ThiG family. Homotetramer. Forms heterodimers with either ThiH or ThiS.

It localises to the cytoplasm. It catalyses the reaction [ThiS sulfur-carrier protein]-C-terminal-Gly-aminoethanethioate + 2-iminoacetate + 1-deoxy-D-xylulose 5-phosphate = [ThiS sulfur-carrier protein]-C-terminal Gly-Gly + 2-[(2R,5Z)-2-carboxy-4-methylthiazol-5(2H)-ylidene]ethyl phosphate + 2 H2O + H(+). It functions in the pathway cofactor biosynthesis; thiamine diphosphate biosynthesis. Functionally, catalyzes the rearrangement of 1-deoxy-D-xylulose 5-phosphate (DXP) to produce the thiazole phosphate moiety of thiamine. Sulfur is provided by the thiocarboxylate moiety of the carrier protein ThiS. In vitro, sulfur can be provided by H(2)S. The protein is Thiazole synthase of Rhodopseudomonas palustris (strain ATCC BAA-98 / CGA009).